The sequence spans 235 residues: Octanoyltransferase (235 aa).

Residues 52-229 form the BPL/LPL catalytic domain; it reads KNRQASMIFC…SICSALEYIN (178 aa). Residues 89 to 96, 159 to 161, and 172 to 174 contribute to the substrate site; these read RGGKITWH, AIG, and GFA. Residue C190 is the Acyl-thioester intermediate of the active site.

It belongs to the LipB family.

The protein localises to the cytoplasm. The catalysed reaction is octanoyl-[ACP] + L-lysyl-[protein] = N(6)-octanoyl-L-lysyl-[protein] + holo-[ACP] + H(+). It functions in the pathway protein modification; protein lipoylation via endogenous pathway; protein N(6)-(lipoyl)lysine from octanoyl-[acyl-carrier-protein]: step 1/2. Catalyzes the transfer of endogenously produced octanoic acid from octanoyl-acyl-carrier-protein onto the lipoyl domains of lipoate-dependent enzymes. Lipoyl-ACP can also act as a substrate although octanoyl-ACP is likely to be the physiological substrate. In Tropheryma whipplei (strain Twist) (Whipple's bacillus), this protein is Octanoyltransferase.